A 130-amino-acid chain; its full sequence is MAETQAPAGYLFSEKHEWVKVEGDTALIGISDFAQSALGDIVFVDLPKSGKTVKQFETFGTIESVKAAEDLYAPVGGEVIESNSALSKNPGDVNSKPFDSWMIKVKGFSTSELEKLLSPEKYKALVAKLE.

Residues 25–106 (TALIGISDFA…PFDSWMIKVK (82 aa)) enclose the Lipoyl-binding domain. Lys-66 carries the post-translational modification N6-lipoyllysine.

The protein belongs to the GcvH family. The glycine cleavage system is composed of four proteins: P, T, L and H. (R)-lipoate is required as a cofactor.

In terms of biological role, the glycine cleavage system catalyzes the degradation of glycine. The H protein shuttles the methylamine group of glycine from the P protein to the T protein. This chain is Glycine cleavage system H protein, found in Leptospira borgpetersenii serovar Hardjo-bovis (strain JB197).